The sequence spans 476 residues: Probable protein S-acyltransferase 5 (476 aa).

Basic and acidic residues predominate over residues M1–H11. Residues M1–S21 are disordered. 2 helical membrane passes run S53–G73 and G85–L105. A disordered region spans residues Y119–P138. One can recognise a DHHC domain in the interval K158 to L208. C188 functions as the S-palmitoyl cysteine intermediate in the catalytic mechanism. A run of 2 helical transmembrane segments spans residues C209–I223 and S246–F266. 2 disordered regions span residues S320–Q340 and V373–D454. Phosphoserine is present on S336. The segment covering S387–R412 has biased composition (basic and acidic residues). S418 is subject to Phosphoserine. A compositionally biased stretch (basic and acidic residues) spans V425–E441.

It belongs to the DHHC palmitoyltransferase family.

Its subcellular location is the cell membrane. It carries out the reaction L-cysteinyl-[protein] + hexadecanoyl-CoA = S-hexadecanoyl-L-cysteinyl-[protein] + CoA. Functionally, palmitoyl acyltransferase. The polypeptide is Probable protein S-acyltransferase 5 (PAT05) (Arabidopsis thaliana (Mouse-ear cress)).